The following is a 156-amino-acid chain: Ribosome-binding factor A (156 aa).

The segment at 124-156 (TRAEYAGEAQPYRLEEEPEGSGDEVPPPGGDQR) is disordered.

Belongs to the RbfA family. In terms of assembly, monomer. Binds 30S ribosomal subunits, but not 50S ribosomal subunits or 70S ribosomes.

It localises to the cytoplasm. Its function is as follows. One of several proteins that assist in the late maturation steps of the functional core of the 30S ribosomal subunit. Associates with free 30S ribosomal subunits (but not with 30S subunits that are part of 70S ribosomes or polysomes). Required for efficient processing of 16S rRNA. May interact with the 5'-terminal helix region of 16S rRNA. This is Ribosome-binding factor A from Salinispora tropica (strain ATCC BAA-916 / DSM 44818 / JCM 13857 / NBRC 105044 / CNB-440).